The sequence spans 234 residues: MPRRARARGGGGGGGEEVKVEDDFIDSVLNFGGGGGGEEDGDDGEEEQQQQQAAAAAMGKEFKSKNLEAERRRRGRLNGNIFALRAVVPKITKMSKEATLSDAIEHIKNLQNEVLELQRQLGDSPGEAWEKQCSASCSESFVPTENAHYQGQVELISLGSCKYNLKIFWTKRAGLFTKVLEALCSYKVQVLSLNTISFYGYAESFFTIEVKGEQDVVMVELRSLLSSIVEVPSI.

The segment at 1-51 (MPRRARARGGGGGGGEEVKVEDDFIDSVLNFGGGGGGEEDGDDGEEEQQQQ) is disordered. Acidic residues predominate over residues 37 to 48 (GEEDGDDGEEEQ). A basic motif; degenerate region spans residues 61–74 (EFKSKNLEAERRRR). The bHLH domain maps to 61 to 110 (EFKSKNLEAERRRRGRLNGNIFALRAVVPKITKMSKEATLSDAIEHIKNL). The interval 75–110 (GRLNGNIFALRAVVPKITKMSKEATLSDAIEHIKNL) is helix-loop-helix motif.

It belongs to the bHLH protein family.

Its subcellular location is the nucleus. Transcription factor that plays a crucial role in tapetum development. Required for male fertility and pollen differentiation within the developing anther. Plays a major role in maintaining tapetum development, starting in early meiosis. Required for pollen mother cell meiosis. May regulate the anther-specific cysteine protease CP1 and lipid-transfer proteins C4 and C6. Required for anther development. Functions in parallel with GAMYB to regulate early anther development. Functions upstream of the transcription factor TDR and may positively regulate its transcription. The polypeptide is Transcription factor UDT1 (Oryza sativa subsp. japonica (Rice)).